The sequence spans 40 residues: U2-ctenitoxin-Pr1a (40 aa).

4 cysteine pairs are disulfide-bonded: C2–C17, C9–C22, C16–C32, and C24–C30.

Expressed by the venom gland.

The protein resides in the secreted. In terms of biological role, neurotoxin. This chain is U2-ctenitoxin-Pr1a, found in Phoneutria reidyi (Brazilian Amazonian armed spider).